A 387-amino-acid polypeptide reads, in one-letter code: GDSL esterase/lipase At2g23540 (387 aa).

A signal peptide spans 1–32 (MATRASTSSRVSPAFTFLVIFFLLSLTASVEA). Catalysis depends on S55, which acts as the Nucleophile. N-linked (GlcNAc...) asparagine glycosylation is found at N139 and N159. Residues D352 and H355 contribute to the active site. N-linked (GlcNAc...) asparagine glycosylation occurs at N380.

The protein belongs to the 'GDSL' lipolytic enzyme family.

The protein resides in the secreted. The polypeptide is GDSL esterase/lipase At2g23540 (Arabidopsis thaliana (Mouse-ear cress)).